A 585-amino-acid polypeptide reads, in one-letter code: Glucose oxidase-like protein fsoC (585 aa).

Residue A104 participates in FAD binding. H521 serves as the catalytic Proton donor. H564 (proton acceptor) is an active-site residue.

The protein belongs to the GMC oxidoreductase family. In terms of assembly, monomer. Requires FAD as cofactor.

Glucose oxidase-like protein; part of the gene cluster that mediates the biosynthesis of the enfumafungin-type antibiotic fuscoatroside. Four enzymes are sufficient to produce fuscoatroside: the terpene cyclase-glycosyl transferase fusion protein fsoAthe cytochrome P450 monoxygenases fsoD and fsoE, and the acetyltransferase fsoF; the cytochrome P450 monooxygenase fsoB and the glucose oxidase-like protein fsoC do not seem to play a role in biosynthesis of fuscoatroside. Its function is as follows. Glucose oxidase; part of the gene cluster that mediates the biosynthesis of the enfumafungin-type antibiotic, fuscoatroside. In Humicola fuscoatra, this protein is Glucose oxidase-like protein fsoC.